The primary structure comprises 331 residues: Meiotically up-regulated gene 172 protein (331 aa).

Residues 72 to 166 (IKNNEYEKQR…KGNYGLVKAR (95 aa)) are a coiled coil.

Belongs to the ADIP family.

It localises to the cytoplasm. Functionally, has a role in meiosis. In Schizosaccharomyces pombe (strain 972 / ATCC 24843) (Fission yeast), this protein is Meiotically up-regulated gene 172 protein (mug172).